The chain runs to 317 residues: Olfactory receptor 5K16 (317 aa).

Residues 1–28 (MEKTNHSLTTQFILVGFSDHPDLKTPLF) lie on the Extracellular side of the membrane. An N-linked (GlcNAc...) asparagine glycan is attached at Asn5. The chain crosses the membrane as a helical span at residues 29–49 (LLFSVIYLVTMVGNLGLVAVI). The Cytoplasmic segment spans residues 50-56 (YLEPRLH). A helical transmembrane segment spans residues 57-77 (TPMYIFLGNLALMDSCCSCAI). Over 78-93 (TPKILENFFSVDRRIS) the chain is Extracellular. Residues 94–114 (LYECMAQFYFLCLAETADCFL) form a helical membrane-spanning segment. The cysteines at positions 97 and 189 are disulfide-linked. Over 115 to 144 (LAAMAYDRYVAICNPLQYHSMMSKKLSIQM) the chain is Cytoplasmic. Residues 145–165 (SIGTFITSNLHSLIHVGCLLR) form a helical membrane-spanning segment. Topologically, residues 166-198 (LTFCKSNRIDHFFCDILPLYRLSCTDPFINELM) are extracellular. A helical transmembrane segment spans residues 199-219 (IYIFSMPIQVFTITTVLVSYF). Topologically, residues 220-239 (CILLTIFKMKSKDGRGKAFS) are cytoplasmic. Residues 240-259 (TCASHFFSVSIFYVCLLMYI) form a helical membrane-spanning segment. The Extracellular segment spans residues 260-268 (RPFDEGNKD). A helical membrane pass occupies residues 269-289 (IPVAVFYTIIIPLLNPFIYSL). The Cytoplasmic portion of the chain corresponds to 290 to 317 (RNKEVVNAVKKVMKTHSIFKNASASMAR).

The protein belongs to the G-protein coupled receptor 1 family.

The protein resides in the cell membrane. Its function is as follows. Potential odorant receptor. This Mus musculus (Mouse) protein is Olfactory receptor 5K16.